Consider the following 611-residue polypeptide: Dihydroxy-acid dehydratase (611 aa).

Aspartate 81 provides a ligand contact to Mg(2+). Residue cysteine 122 coordinates [2Fe-2S] cluster. Aspartate 123 and lysine 124 together coordinate Mg(2+). Lysine 124 carries the N6-carboxylysine modification. Cysteine 195 contributes to the [2Fe-2S] cluster binding site. Mg(2+) is bound at residue glutamate 491. Residue serine 517 is the Proton acceptor of the active site.

Belongs to the IlvD/Edd family. As to quaternary structure, homodimer. [2Fe-2S] cluster serves as cofactor. Mg(2+) is required as a cofactor.

The enzyme catalyses (2R)-2,3-dihydroxy-3-methylbutanoate = 3-methyl-2-oxobutanoate + H2O. It catalyses the reaction (2R,3R)-2,3-dihydroxy-3-methylpentanoate = (S)-3-methyl-2-oxopentanoate + H2O. The protein operates within amino-acid biosynthesis; L-isoleucine biosynthesis; L-isoleucine from 2-oxobutanoate: step 3/4. Its pathway is amino-acid biosynthesis; L-valine biosynthesis; L-valine from pyruvate: step 3/4. In terms of biological role, functions in the biosynthesis of branched-chain amino acids. Catalyzes the dehydration of (2R,3R)-2,3-dihydroxy-3-methylpentanoate (2,3-dihydroxy-3-methylvalerate) into 2-oxo-3-methylpentanoate (2-oxo-3-methylvalerate) and of (2R)-2,3-dihydroxy-3-methylbutanoate (2,3-dihydroxyisovalerate) into 2-oxo-3-methylbutanoate (2-oxoisovalerate), the penultimate precursor to L-isoleucine and L-valine, respectively. The protein is Dihydroxy-acid dehydratase of Pasteurella multocida (strain Pm70).